Here is a 229-residue protein sequence, read N- to C-terminus: MIFAANFKMNHTRASTKAYLDALNQKLASKRSEDRVFVFPPSTALDHYDGDFTIGAQNAYLEKNGAFTGEIGLDQLDEFAIKTILIGHSERRDILGEDQAFVAEKFSYFKSQGFEIIYCIGEALEVREAGEEAVMVHLLSQFEGIDLSYEKMIVAYEPIWAIGTGHSATTEAIASTHAALKQHFDRPLLYGGSVKPANIKEITAIESVDGVLVGSASLEVESFTQMIFA.

6 to 8 (NFK) serves as a coordination point for substrate. H88 (electrophile) is an active-site residue. E157 (proton acceptor) is an active-site residue. Substrate contacts are provided by G163 and S193.

It belongs to the triosephosphate isomerase family. Homodimer.

Its subcellular location is the cytoplasm. It carries out the reaction D-glyceraldehyde 3-phosphate = dihydroxyacetone phosphate. It participates in carbohydrate biosynthesis; gluconeogenesis. Its pathway is carbohydrate degradation; glycolysis; D-glyceraldehyde 3-phosphate from glycerone phosphate: step 1/1. Functionally, involved in the gluconeogenesis. Catalyzes stereospecifically the conversion of dihydroxyacetone phosphate (DHAP) to D-glyceraldehyde-3-phosphate (G3P). This chain is Triosephosphate isomerase, found in Sulfurovum sp. (strain NBC37-1).